Consider the following 469-residue polypeptide: Tetratricopeptide repeat protein 38 (469 aa).

Position 2 is an N-acetylalanine (Ala-2). Ser-5 is modified (phosphoserine). TPR repeat units follow at residues 108–141 (REQL…HPTD), 180–213 (SYVK…NPTD), and 252–285 (CHNY…SLQA).

Belongs to the TTC38 family.

The sequence is that of Tetratricopeptide repeat protein 38 (TTC38) from Homo sapiens (Human).